A 326-amino-acid polypeptide reads, in one-letter code: Iron-sulfur cluster assembly SufBD family protein PH0883 (326 aa).

It belongs to the iron-sulfur cluster assembly SufBD family.

This chain is Iron-sulfur cluster assembly SufBD family protein PH0883, found in Pyrococcus horikoshii (strain ATCC 700860 / DSM 12428 / JCM 9974 / NBRC 100139 / OT-3).